The primary structure comprises 613 residues: MKKAKLIFKDNTPFSLDFDDFYFNSKDGLNESKFVYTHSFEWKNQENFIIAESGFGIGLNFFLTLKRFLQTTPSKRPKKLFYISIEAFYIEKEQLREIYQKLGFYEEFKELLEQFLKFYPKAKEGIYRFYFEDCFLDLVFEDITILKELDFKADIWYLDGFSPNKNSQMFDENLIFEVARLSKKNTQICTFSSASFLQKNLKKYGFRVEKTKGFRKREMIKAYLENELEFKDKEAYFSRTFSSLKNKKVAIIGAGISSAVLAYELSLRGFEIDVFEKHLELGKGASGNESGILSSLILKPKVNLGEFSELSFIEASRFYRQILDLEFKGVVEFAHNDLMQERFDTQRENVLFKISKNQAFLEEGGVIFPKNLVKNLFEKSKACIYFNHEFQAYKFENECFTLKFKNDIVKSDYAVLIYAMGADTKDFVFYDEMKLSKVRGQVTHLKPFLNTPFPLSSKAYICPVKDDLQVIGASYDRLDASLESKEEDDKQNIENIAEFIDKNTKLEIIGSKVGFRSYSSDRFMIVGNAYDEVFYKEEYKALLWTKNKEQKLAKISCNLYFNFAHGSRGFSTSVLAARYLCALINNEPLYLEKKYIHAIHPARFLIRKLKKGL.

The tRNA (mnm(5)s(2)U34)-methyltransferase stretch occupies residues 1–225 (MKKAKLIFKD…KREMIKAYLE (225 aa)). The segment at 252–613 (IGAGISSAVL…FLIRKLKKGL (362 aa)) is FAD-dependent cmnm(5)s(2)U34 oxidoreductase.

It in the N-terminal section; belongs to the methyltransferase superfamily. tRNA (mnm(5)s(2)U34)-methyltransferase family. In the C-terminal section; belongs to the DAO family. It depends on FAD as a cofactor.

The protein resides in the cytoplasm. The catalysed reaction is 5-aminomethyl-2-thiouridine(34) in tRNA + S-adenosyl-L-methionine = 5-methylaminomethyl-2-thiouridine(34) in tRNA + S-adenosyl-L-homocysteine + H(+). Its function is as follows. Catalyzes the last two steps in the biosynthesis of 5-methylaminomethyl-2-thiouridine (mnm(5)s(2)U) at the wobble position (U34) in tRNA. Catalyzes the FAD-dependent demodification of cmnm(5)s(2)U34 to nm(5)s(2)U34, followed by the transfer of a methyl group from S-adenosyl-L-methionine to nm(5)s(2)U34, to form mnm(5)s(2)U34. This chain is tRNA 5-methylaminomethyl-2-thiouridine biosynthesis bifunctional protein MnmC, found in Campylobacter jejuni subsp. jejuni serotype O:6 (strain 81116 / NCTC 11828).